A 69-amino-acid chain; its full sequence is Sec-independent protein translocase protein TatA (69 aa).

The chain crosses the membrane as a helical span at residues 1-21 (MFGKLGMPELVLIFAVALVIF).

This sequence belongs to the TatA/E family. Forms a complex with TatC.

Its subcellular location is the cell membrane. Part of the twin-arginine translocation (Tat) system that transports large folded proteins containing a characteristic twin-arginine motif in their signal peptide across membranes. TatA could form the protein-conducting channel of the Tat system. The protein is Sec-independent protein translocase protein TatA of Alkaliphilus metalliredigens (strain QYMF).